Reading from the N-terminus, the 147-residue chain is Allograft inflammatory factor 1 (147 aa).

Ser2 bears the N-acetylserine mark. N6-acetyllysine is present on Lys11. Ser39 is subject to Phosphoserine. In terms of domain architecture, EF-hand 1 spans 45–80 (SKLEGFKEKYMEFDLNGNGDIDIMSLKRMLEKLGVP). Residues Asp58, Asn60, Asn62, Asp64, Thr100, and Asp105 each contribute to the Ca(2+) site. Residues 81-115 (KTHLELKKLIGEVSSGSGETFSYPDFLRMMLGKRS) form the EF-hand 2; degenerate domain. The interval 128-147 (AREKEKPTGPPAKKAISELP) is disordered.

Homodimer (Potential). Monomer. Interacts with LCP1. Post-translationally, phosphorylated on serine residues. In terms of tissue distribution, detected in T-lymphocytes and peripheral blood mononuclear cells.

It localises to the cytoplasm. It is found in the cytoskeleton. Its subcellular location is the cell projection. The protein resides in the ruffle membrane. The protein localises to the phagocytic cup. In terms of biological role, actin-binding protein that enhances membrane ruffling and RAC activation. Enhances the actin-bundling activity of LCP1. Binds calcium. Plays a role in RAC signaling and in phagocytosis. May play a role in macrophage activation and function. Promotes the proliferation of vascular smooth muscle cells and of T-lymphocytes. Enhances lymphocyte migration. Plays a role in vascular inflammation. The sequence is that of Allograft inflammatory factor 1 (AIF1) from Homo sapiens (Human).